Here is a 552-residue protein sequence, read N- to C-terminus: Probable acyl-activating enzyme 5, peroxisomal (552 aa).

Residues 550–552 carry the Microbody targeting signal motif; the sequence is SRM.

This sequence belongs to the ATP-dependent AMP-binding enzyme family. As to expression, expressed in roots, stems and developing seeds.

It is found in the peroxisome. Its function is as follows. May act as an acid--thiol ligase that activates carboxylic acids by forming acyl-CoAs. In Arabidopsis thaliana (Mouse-ear cress), this protein is Probable acyl-activating enzyme 5, peroxisomal (AAE5).